The following is a 118-amino-acid chain: MDRVFIEELTVFAQIGVYDWEQQIKQKLVFDLEMAWDCKQAAETDDVVYCLNYAEVSQAIIDYVESKPFLLIERVAYEVADLLESRYQLQGLKIKLSKPKAVAQARNVGVLIVRGCLK.

Residues E21, Y53, and 72–73 (IE) each bind substrate. The active-site Proton donor/acceptor is the K98.

The protein belongs to the DHNA family.

It carries out the reaction 7,8-dihydroneopterin = 6-hydroxymethyl-7,8-dihydropterin + glycolaldehyde. The enzyme catalyses 7,8-dihydroneopterin = 7,8-dihydromonapterin. It functions in the pathway cofactor biosynthesis; tetrahydrofolate biosynthesis; 2-amino-4-hydroxy-6-hydroxymethyl-7,8-dihydropteridine diphosphate from 7,8-dihydroneopterin triphosphate: step 3/4. In terms of biological role, catalyzes the conversion of 7,8-dihydroneopterin to 6-hydroxymethyl-7,8-dihydropterin. Can use L-threo-dihydroneopterin and D-erythro-dihydroneopterin as substrates for the formation of 6-hydroxymethyldihydropterin, but it can also catalyze the epimerization of carbon 2' of dihydroneopterin to dihydromonapterin. The polypeptide is Dihydroneopterin aldolase (folB) (Haemophilus influenzae (strain ATCC 51907 / DSM 11121 / KW20 / Rd)).